A 122-amino-acid chain; its full sequence is Large ribosomal subunit protein uL14 (122 aa).

This sequence belongs to the universal ribosomal protein uL14 family. Part of the 50S ribosomal subunit. Forms a cluster with proteins L3 and L19. In the 70S ribosome, L14 and L19 interact and together make contacts with the 16S rRNA in bridges B5 and B8.

Binds to 23S rRNA. Forms part of two intersubunit bridges in the 70S ribosome. This chain is Large ribosomal subunit protein uL14, found in Mycoplasma pneumoniae (strain ATCC 29342 / M129 / Subtype 1) (Mycoplasmoides pneumoniae).